A 311-amino-acid chain; its full sequence is Pyrimidine-specific ribonucleoside hydrolase RihA (311 aa).

Residue H240 is part of the active site.

It belongs to the IUNH family. RihA subfamily.

Functionally, hydrolyzes with equal efficiency cytidine or uridine to ribose and cytosine or uracil, respectively. The chain is Pyrimidine-specific ribonucleoside hydrolase RihA from Escherichia coli O7:K1 (strain IAI39 / ExPEC).